We begin with the raw amino-acid sequence, 266 residues long: MPDVTLTTLQGLKQKGEKIVMLTCYDATFAKTACDAGVEMLLIGDSLGMVLQGHDSTLPVTVADMAYHTASVKRGNRGAMIVADLPFMANATTEQTLNNSALLMQAGAHMIKLEGTAWLAESIRLLADRGIPVCAHMGLTPQAVNLFGGYKVQGREEAQAQQMLEDAKSLEAAGAAMLLLECVPSELAARITRAVQIPVIGIGAGSDTDGQVLVLHDMLGLSLSGRVPKFVKNFMREHGDIPAAIAGYVKAVKAVEFPAAEHGFSA.

Mg(2+) contacts are provided by aspartate 45 and aspartate 84. 3-methyl-2-oxobutanoate contacts are provided by residues 45–46 (DS), aspartate 84, and lysine 112. Glutamate 114 is a Mg(2+) binding site. The active-site Proton acceptor is the glutamate 181.

This sequence belongs to the PanB family. In terms of assembly, homodecamer; pentamer of dimers. Mg(2+) is required as a cofactor.

The protein resides in the cytoplasm. It carries out the reaction 3-methyl-2-oxobutanoate + (6R)-5,10-methylene-5,6,7,8-tetrahydrofolate + H2O = 2-dehydropantoate + (6S)-5,6,7,8-tetrahydrofolate. Its pathway is cofactor biosynthesis; (R)-pantothenate biosynthesis; (R)-pantoate from 3-methyl-2-oxobutanoate: step 1/2. In terms of biological role, catalyzes the reversible reaction in which hydroxymethyl group from 5,10-methylenetetrahydrofolate is transferred onto alpha-ketoisovalerate to form ketopantoate. This Stutzerimonas stutzeri (strain A1501) (Pseudomonas stutzeri) protein is 3-methyl-2-oxobutanoate hydroxymethyltransferase.